The primary structure comprises 298 residues: Probable 3-mercaptopyruvate sulfurtransferase (298 aa).

A Rhodanese 1 domain is found at 24-141; that stretch reads NAQKTVLLDA…WKTEGLELET (118 aa). The tract at residues 142–175 is hinge; sequence GEPRTPKPVVYEGAKLNKDLVASFDDIVKVIESP. Ser-164 is modified (phosphoserine). Residues 176–292 enclose the Rhodanese 2 domain; that stretch reads DAAGVHIVDA…YGKRANEDSS (117 aa). Residue Arg-190 participates in substrate binding. Cys-252 functions as the Cysteine persulfide intermediate in the catalytic mechanism.

The protein localises to the mitochondrion. It carries out the reaction 2-oxo-3-sulfanylpropanoate + [thioredoxin]-dithiol = [thioredoxin]-disulfide + hydrogen sulfide + pyruvate + H(+). In terms of biological role, required for formation of the 2-thio group of the 5-methoxycarbonylmethyl-2-thiouridine modified base in some tRNAs. In Schizosaccharomyces pombe (strain 972 / ATCC 24843) (Fission yeast), this protein is Probable 3-mercaptopyruvate sulfurtransferase (tum1).